A 121-amino-acid polypeptide reads, in one-letter code: Amelogenin (121 aa).

Residues 1–121 (LHHQIIPVLS…DLPLEPWPAS (121 aa)) are disordered. Composition is skewed to polar residues over residues 10 to 19 (SQHQTPTHAL) and 47 to 59 (HSVTPTQHHQSNL). The segment covering 60–84 (PQPGQQPFQPQFPQKPTHRPIQPQA) has biased composition (low complexity). Pro residues predominate over residues 85-121 (PVHPMPPMPQPQLPPMFPLQPLPPLLPDLPLEPWPAS).

The protein belongs to the amelogenin family.

It localises to the secreted. The protein localises to the extracellular space. The protein resides in the extracellular matrix. Plays a role in the biomineralization of teeth. Seems to regulate the formation of crystallites during the secretory stage of tooth enamel development. Thought to play a major role in the structural organization and mineralization of developing enamel. The polypeptide is Amelogenin (AMEL) (Tachyglossus aculeatus aculeatus (Southeast Australian short-beaked echidna)).